The sequence spans 498 residues: UDP-N-acetylmuramate--L-alanine ligase (498 aa).

122-128 (GTHGKTS) serves as a coordination point for ATP.

The protein belongs to the MurCDEF family.

The protein localises to the cytoplasm. The catalysed reaction is UDP-N-acetyl-alpha-D-muramate + L-alanine + ATP = UDP-N-acetyl-alpha-D-muramoyl-L-alanine + ADP + phosphate + H(+). Its pathway is cell wall biogenesis; peptidoglycan biosynthesis. Cell wall formation. This is UDP-N-acetylmuramate--L-alanine ligase from Corynebacterium jeikeium (strain K411).